Consider the following 1054-residue polypeptide: MNWHFLRTATVLLIFLVVVEINSEFRIQVRDYNTKNGTIKWHSIRRQKREWIKFAAACREGEDNSKRNPIAKIHSDCAANQQVTYRISGVGIDQPPYGIFIINQKTGEINITSIVDREITPFFIIYCRALNSLGQDLERPLELRVRVLDINDNPPVFSMSTFVGQIEENSNANTLVMRLNATGADEPNNLNSKIAFKIIRQEPSDSPMFIINRNTGEIRTMNNFLDREQYSQYSLAVRGSDRDGGADGMSAECECNIKILDVNDNIPYMEPSSHMVRIEENALSQNLVEIRVIDLDEEFSANWMAVIFFISGNEGGWFDIEMNERTNVGILKVIKPLDYEAVQNLQLSLGVRNKADFHHSIMSQYKVTATAISVTVLNVIEGSVFRPGSKTYVVRSDMGQNYKVGDFVATDLDTGLASTTVRYVMGNNPANLLNVDSKTGVITLRNKVTMEQYEMLNGKYQGTILSIDDALQRTCTGTINIDLQGSGWEKDSEKVTSSQNSGSSTGDSSGGTGGGGRENPSEGDTTTNTGGKTSTDYEDGETQTQSNNNHQELGSNNLSDNVHFGPAGIGLLIMGFLVLGLVPFLLMCCDCGGAPGAGAGFEPVPECSDGAIHSWAVEGPQPLPTDATTVCVPPIPSNNANVIECIDTSGVYTNEYGGREMQDLGGGERTTGFELTEGVKTSGVPEICQEYSGTLRRNSMRECREGGLNMNFMESYFCQKAYAYADEDEGRPSNDCLLIYDIEGVGSPAGSVGCCSFIGEDLDDSFLDTLGPKFKKLADISLGKEVEPDPSWPPESTEPICPQQGTEPIIGGHPPISPHFGTTTVISENTYPSGPGVQHPMPIPDPLGYGNVTVTESYTTSGTLKPTVHVHDNRHASNVVVTERVVGPISGTDLHGMLEMPDLRDGSNVIVTERVIAPSSSLPTSLTMPDPRESSNVVVTERVIRPASGMMGNLSIHPELSNAQNVIVTERVVSGSGISGISGLVGSAMGVSGGGMAMNSLGGGGGLSSSMGGTATIGHVRSSSDHHFSQTLGSASPSTARSRITKYSTVQYTK.

The signal sequence occupies residues 1-23 (MNWHFLRTATVLLIFLVVVEINS). Residues 24-49 (EFRIQVRDYNTKNGTIKWHSIRRQKR) constitute a propeptide that is removed on maturation. Residues Asn36, Asn110, and Asn180 are each glycosylated (N-linked (GlcNAc...) asparagine). Cadherin domains lie at 50 to 157 (EWIK…PPVF), 158 to 269 (SMST…IPYM), 270 to 389 (EPSS…RPGS), and 386 to 493 (RPGS…KDSE). Residues 50 to 566 (EWIKFAAACR…NLSDNVHFGP (517 aa)) lie on the Extracellular side of the membrane. The interval 487–554 (GWEKDSEKVT…QSNNNHQELG (68 aa)) is disordered. Residues 496-507 (TSSQNSGSSTGD) show a composition bias toward low complexity. Residues 508–517 (SSGGTGGGGR) show a composition bias toward gly residues. The segment covering 523–534 (GDTTTNTGGKTS) has biased composition (low complexity). Over residues 542–554 (TQTQSNNNHQELG) the composition is skewed to polar residues. N-linked (GlcNAc...) asparagine glycosylation is present at Asn557. Residues 567 to 587 (AGIGLLIMGFLVLGLVPFLLM) form a helical membrane-spanning segment. Over 588 to 1054 (CCDCGGAPGA…TKYSTVQYTK (467 aa)) the chain is Cytoplasmic. 5 Desmoglein repeat repeats span residues 830 to 856 (TYPSGPGVQHPMPIPDPLGYGNVTVTE), 857 to 886 (SYTTSGTLKPTVHVHDNRHASNVVVTERVV), 887 to 916 (GPISGTDLHGMLEMPDLRDGSNVIVTERVI), 917 to 944 (APSSSLPTSLTMPDPRESSNVVVTERVI), and 945 to 973 (RPASGMMGNLSIHPELSNAQNVIVTERVV). The interval 1018–1040 (GHVRSSSDHHFSQTLGSASPSTA) is disordered. Positions 1029-1040 (SQTLGSASPSTA) are enriched in polar residues.

Binds to JUP/plakoglobin. Interacts with PKP2. Interacts with DSC3; there is evidence to suggest that the interaction promotes cell-cell adhesion of keratinocytes.

Its subcellular location is the cell membrane. It is found in the cell junction. The protein resides in the desmosome. The protein localises to the cytoplasm. It localises to the nucleus. Component of intercellular desmosome junctions. Involved in the interaction of plaque proteins and intermediate filaments mediating cell-cell adhesion. This Canis lupus familiaris (Dog) protein is Desmoglein-1 (DSG1).